The primary structure comprises 329 residues: Diaminopimelate epimerase (329 aa).

Substrate contacts are provided by asparagine 14 and asparagine 73. Catalysis depends on cysteine 82, which acts as the Proton donor. Substrate contacts are provided by residues 83–84, asparagine 170, asparagine 206, and 224–225; these read GN and ER. Residue cysteine 233 is the Proton acceptor of the active site. Residue 234-235 participates in substrate binding; it reads GT.

This sequence belongs to the diaminopimelate epimerase family. As to quaternary structure, homodimer.

The protein localises to the cytoplasm. The enzyme catalyses (2S,6S)-2,6-diaminopimelate = meso-2,6-diaminopimelate. It functions in the pathway amino-acid biosynthesis; L-lysine biosynthesis via DAP pathway; DL-2,6-diaminopimelate from LL-2,6-diaminopimelate: step 1/1. Functionally, catalyzes the stereoinversion of LL-2,6-diaminopimelate (L,L-DAP) to meso-diaminopimelate (meso-DAP), a precursor of L-lysine and an essential component of the bacterial peptidoglycan. The polypeptide is Diaminopimelate epimerase (Listeria monocytogenes serotype 4b (strain CLIP80459)).